A 676-amino-acid chain; its full sequence is DNA ligase (676 aa).

NAD(+)-binding positions include 41–45 (DLTYD), 90–91 (SL), and E123. K125 acts as the N6-AMP-lysine intermediate in catalysis. R146, E180, K293, and K317 together coordinate NAD(+). Zn(2+)-binding residues include C408, C411, C424, and C429.

The protein belongs to the NAD-dependent DNA ligase family. LigA subfamily. The cofactor is Mg(2+). It depends on Mn(2+) as a cofactor.

The enzyme catalyses NAD(+) + (deoxyribonucleotide)n-3'-hydroxyl + 5'-phospho-(deoxyribonucleotide)m = (deoxyribonucleotide)n+m + AMP + beta-nicotinamide D-nucleotide.. DNA ligase that catalyzes the formation of phosphodiester linkages between 5'-phosphoryl and 3'-hydroxyl groups in double-stranded DNA using NAD as a coenzyme and as the energy source for the reaction. It is essential for DNA replication and repair of damaged DNA. In Borrelia turicatae (strain 91E135), this protein is DNA ligase.